Here is a 256-residue protein sequence, read N- to C-terminus: MRVTLALVALCLASVAALPEKQQRIVGGSVTTIEQWPSGSALLYSWNLVTYSQACGGAILNTRSILSAAHCFIGDAANRWRIRTGSTWANSGGVVHNTALIIIHPSYNTRTLDNDIAILRSATTIAQNNQARPASIAGANYNLADNQAVWAIGWGATCPGCAGSEQLRHIQIWTVNQNTCRSRYLEVGGTITDNMLCSGWLDVGGRDQCQGDSGGPLFHNNVVVGVCSWGQSCALARYPGVNARVSRFTAWIQANA.

The first 17 residues, 1–17 (MRVTLALVALCLASVAA), serve as a signal peptide directing secretion. The propeptide at 18-24 (LPEKQQR) is activation peptide. In terms of domain architecture, Peptidase S1 spans 25-256 (IVGGSVTTIE…RFTAWIQANA (232 aa)). A disulfide bridge links Cys-55 with Cys-71. Residues His-70 and Asp-115 each act as charge relay system in the active site. Cystine bridges form between Cys-180/Cys-197 and Cys-209/Cys-233. Residue Ser-213 is the Charge relay system of the active site.

This sequence belongs to the peptidase S1 family.

The protein resides in the secreted. Its subcellular location is the extracellular space. The catalysed reaction is Preferential cleavage: Arg-|-Xaa, Lys-|-Xaa.. Responsible for the activation of delta-endotoxin from Bacillus thuringiensis. This Choristoneura fumiferana (Spruce budworm moth) protein is Trypsin CFT-1.